The sequence spans 468 residues: ATP synthase subunit beta (468 aa).

Residue 155–162 participates in ATP binding; sequence GGAGVGKT.

Belongs to the ATPase alpha/beta chains family. In terms of assembly, F-type ATPases have 2 components, CF(1) - the catalytic core - and CF(0) - the membrane proton channel. CF(1) has five subunits: alpha(3), beta(3), gamma(1), delta(1), epsilon(1). CF(0) has three main subunits: a(1), b(2) and c(9-12). The alpha and beta chains form an alternating ring which encloses part of the gamma chain. CF(1) is attached to CF(0) by a central stalk formed by the gamma and epsilon chains, while a peripheral stalk is formed by the delta and b chains.

Its subcellular location is the cell membrane. It carries out the reaction ATP + H2O + 4 H(+)(in) = ADP + phosphate + 5 H(+)(out). Its function is as follows. Produces ATP from ADP in the presence of a proton gradient across the membrane. The catalytic sites are hosted primarily by the beta subunits. This chain is ATP synthase subunit beta, found in Streptococcus agalactiae serotype Ia (strain ATCC 27591 / A909 / CDC SS700).